The sequence spans 150 residues: UPF0178 protein ASA_3749 (150 aa).

The protein belongs to the UPF0178 family.

The sequence is that of UPF0178 protein ASA_3749 from Aeromonas salmonicida (strain A449).